The primary structure comprises 106 residues: MMNLLNTSLEENGSFLTALYVICEFVALYLLGRALQAFVQAADACCLFWYTWVVVPGAKGTAFVYKHTYGKKLNNPELEAVIVNEFPKNGWNNKNPANFQNGKLHT.

At 1-11 (MMNLLNTSLEE) the chain is on the virion surface side. The helical transmembrane segment at 12–32 (NGSFLTALYVICEFVALYLLG) threads the bilayer. Topologically, residues 33–106 (RALQAFVQAA…ANFQNGKLHT (74 aa)) are intravirion.

The protein belongs to the gammacoronaviruses E protein family. As to quaternary structure, homooligomer. Interacts with the M membrane protein in the budding compartment of the host cell, which is located between endoplasmic reticulum and the Golgi complex. The cytoplasmic tails of both proteins are important for this function. Interacts with Nucleoprotein.

Its subcellular location is the host Golgi apparatus membrane. Functionally, plays a central role in virus morphogenesis and assembly. Acts as a viroporin and self-assembles in host membranes forming pentameric protein-lipid pores that allow ion transport. Also plays a role in the induction of apoptosis. This is Envelope small membrane protein from Gallus gallus (Chicken).